The sequence spans 75 residues: MVCIPCIVIPVLLWVYKRFLEPVLYPIISPIISRFWRKTPLQDTPQQKTSTAECNGAANGSTANGPKTVADKKAD.

The interval 1 to 37 (MVCIPCIVIPVLLWVYKRFLEPVLYPIISPIISRFWR) is necessary for its localzation to the endoplasmic reticulum and lipid droplets. The segment covering 43–65 (DTPQQKTSTAECNGAANGSTANG) has biased composition (polar residues). The interval 43-75 (DTPQQKTSTAECNGAANGSTANGPKTVADKKAD) is disordered.

The protein belongs to the UPF0729 family.

The protein resides in the endoplasmic reticulum. It localises to the lipid droplet. This Danio rerio (Zebrafish) protein is UPF0729 protein C18orf32 homolog.